Reading from the N-terminus, the 176-residue chain is Methylated-DNA--protein-cysteine methyltransferase (176 aa).

Cys-142 (nucleophile; methyl group acceptor) is an active-site residue.

The protein belongs to the MGMT family.

It localises to the cytoplasm. The enzyme catalyses a 6-O-methyl-2'-deoxyguanosine in DNA + L-cysteinyl-[protein] = S-methyl-L-cysteinyl-[protein] + a 2'-deoxyguanosine in DNA. It carries out the reaction a 4-O-methyl-thymidine in DNA + L-cysteinyl-[protein] = a thymidine in DNA + S-methyl-L-cysteinyl-[protein]. Its function is as follows. Involved in the cellular defense against the biological effects of O6-methylguanine (O6-MeG) and O4-methylthymine (O4-MeT) in DNA. Repairs the methylated nucleobase in DNA by stoichiometrically transferring the methyl group to a cysteine residue in the enzyme. This is a suicide reaction: the enzyme is irreversibly inactivated. The sequence is that of Methylated-DNA--protein-cysteine methyltransferase from Methanothermobacter thermautotrophicus (strain ATCC 29096 / DSM 1053 / JCM 10044 / NBRC 100330 / Delta H) (Methanobacterium thermoautotrophicum).